We begin with the raw amino-acid sequence, 214 residues long: Pyridoxine/pyridoxamine 5'-phosphate oxidase (214 aa).

Substrate contacts are provided by residues 8–11 (RINY) and Lys-66. Residues 61-66 (RILLIK), 76-77 (FT), Arg-82, Lys-83, and Gln-105 contribute to the FMN site. 3 residues coordinate substrate: Tyr-123, Arg-127, and Ser-131. FMN-binding positions include 140-141 (QS) and Trp-184. Residue 190-192 (RLH) participates in substrate binding. Position 194 (Arg-194) interacts with FMN.

Belongs to the pyridoxamine 5'-phosphate oxidase family. Homodimer. FMN serves as cofactor.

The enzyme catalyses pyridoxamine 5'-phosphate + O2 + H2O = pyridoxal 5'-phosphate + H2O2 + NH4(+). The catalysed reaction is pyridoxine 5'-phosphate + O2 = pyridoxal 5'-phosphate + H2O2. It participates in cofactor metabolism; pyridoxal 5'-phosphate salvage; pyridoxal 5'-phosphate from pyridoxamine 5'-phosphate: step 1/1. It functions in the pathway cofactor metabolism; pyridoxal 5'-phosphate salvage; pyridoxal 5'-phosphate from pyridoxine 5'-phosphate: step 1/1. Functionally, catalyzes the oxidation of either pyridoxine 5'-phosphate (PNP) or pyridoxamine 5'-phosphate (PMP) into pyridoxal 5'-phosphate (PLP). In Burkholderia vietnamiensis (strain G4 / LMG 22486) (Burkholderia cepacia (strain R1808)), this protein is Pyridoxine/pyridoxamine 5'-phosphate oxidase.